We begin with the raw amino-acid sequence, 294 residues long: Phenylalanine-4-hydroxylase (294 aa).

The disordered stretch occupies residues 1 to 20 (MSGDGLSNGPPPGARPDWTI). The Fe cation site is built by histidine 129, histidine 134, and glutamate 175.

It belongs to the biopterin-dependent aromatic amino acid hydroxylase family. Requires Fe(2+) as cofactor.

The enzyme catalyses (6R)-L-erythro-5,6,7,8-tetrahydrobiopterin + L-phenylalanine + O2 = (4aS,6R)-4a-hydroxy-L-erythro-5,6,7,8-tetrahydrobiopterin + L-tyrosine. The protein operates within amino-acid degradation; L-phenylalanine degradation; acetoacetate and fumarate from L-phenylalanine: step 1/6. The chain is Phenylalanine-4-hydroxylase (phhA) from Caulobacter vibrioides (strain ATCC 19089 / CIP 103742 / CB 15) (Caulobacter crescentus).